The chain runs to 583 residues: Proline--tRNA ligase (583 aa).

Belongs to the class-II aminoacyl-tRNA synthetase family. ProS type 1 subfamily. In terms of assembly, homodimer.

It is found in the cytoplasm. It carries out the reaction tRNA(Pro) + L-proline + ATP = L-prolyl-tRNA(Pro) + AMP + diphosphate. Its function is as follows. Catalyzes the attachment of proline to tRNA(Pro) in a two-step reaction: proline is first activated by ATP to form Pro-AMP and then transferred to the acceptor end of tRNA(Pro). As ProRS can inadvertently accommodate and process non-cognate amino acids such as alanine and cysteine, to avoid such errors it has two additional distinct editing activities against alanine. One activity is designated as 'pretransfer' editing and involves the tRNA(Pro)-independent hydrolysis of activated Ala-AMP. The other activity is designated 'posttransfer' editing and involves deacylation of mischarged Ala-tRNA(Pro). The misacylated Cys-tRNA(Pro) is not edited by ProRS. The protein is Proline--tRNA ligase of Aromatoleum aromaticum (strain DSM 19018 / LMG 30748 / EbN1) (Azoarcus sp. (strain EbN1)).